The primary structure comprises 206 residues: Thiamine-phosphate synthase (206 aa).

4-amino-2-methyl-5-(diphosphooxymethyl)pyrimidine-binding positions include 38-42 (QLRAK) and Asn70. Mg(2+)-binding residues include Asp71 and Asp90. 4-amino-2-methyl-5-(diphosphooxymethyl)pyrimidine is bound at residue Ser107. 133-135 (TTT) serves as a coordination point for 2-[(2R,5Z)-2-carboxy-4-methylthiazol-5(2H)-ylidene]ethyl phosphate. Residue Lys136 participates in 4-amino-2-methyl-5-(diphosphooxymethyl)pyrimidine binding. Residues Gly164 and 184-185 (VS) contribute to the 2-[(2R,5Z)-2-carboxy-4-methylthiazol-5(2H)-ylidene]ethyl phosphate site.

Belongs to the thiamine-phosphate synthase family. It depends on Mg(2+) as a cofactor.

The enzyme catalyses 2-[(2R,5Z)-2-carboxy-4-methylthiazol-5(2H)-ylidene]ethyl phosphate + 4-amino-2-methyl-5-(diphosphooxymethyl)pyrimidine + 2 H(+) = thiamine phosphate + CO2 + diphosphate. It catalyses the reaction 2-(2-carboxy-4-methylthiazol-5-yl)ethyl phosphate + 4-amino-2-methyl-5-(diphosphooxymethyl)pyrimidine + 2 H(+) = thiamine phosphate + CO2 + diphosphate. It carries out the reaction 4-methyl-5-(2-phosphooxyethyl)-thiazole + 4-amino-2-methyl-5-(diphosphooxymethyl)pyrimidine + H(+) = thiamine phosphate + diphosphate. It functions in the pathway cofactor biosynthesis; thiamine diphosphate biosynthesis; thiamine phosphate from 4-amino-2-methyl-5-diphosphomethylpyrimidine and 4-methyl-5-(2-phosphoethyl)-thiazole: step 1/1. In terms of biological role, condenses 4-methyl-5-(beta-hydroxyethyl)thiazole monophosphate (THZ-P) and 2-methyl-4-amino-5-hydroxymethyl pyrimidine pyrophosphate (HMP-PP) to form thiamine monophosphate (TMP). This is Thiamine-phosphate synthase from Herpetosiphon aurantiacus (strain ATCC 23779 / DSM 785 / 114-95).